Reading from the N-terminus, the 62-residue chain is Sperm protamine P1 (62 aa).

Positions 1–62 (MARYRHSXSR…RYSRRRRRRY (62 aa)) are disordered.

It belongs to the protamine P1 family. As to expression, testis.

The protein resides in the nucleus. The protein localises to the chromosome. In terms of biological role, protamines substitute for histones in the chromatin of sperm during the haploid phase of spermatogenesis. They compact sperm DNA into a highly condensed, stable and inactive complex. The sequence is that of Sperm protamine P1 (PRM1) from Petrogale xanthopus (Yellow-footed rock wallaby).